A 183-amino-acid chain; its full sequence is ATP synthase subunit b, chloroplastic (183 aa).

The chain crosses the membrane as a helical span at residues 27-49 (LATNLINLTVVVGVLIYFGKGVL).

It belongs to the ATPase B chain family. In terms of assembly, F-type ATPases have 2 components, F(1) - the catalytic core - and F(0) - the membrane proton channel. F(1) has five subunits: alpha(3), beta(3), gamma(1), delta(1), epsilon(1). F(0) has four main subunits: a(1), b(1), b'(1) and c(10-14). The alpha and beta chains form an alternating ring which encloses part of the gamma chain. F(1) is attached to F(0) by a central stalk formed by the gamma and epsilon chains, while a peripheral stalk is formed by the delta, b and b' chains.

It is found in the plastid. It localises to the chloroplast thylakoid membrane. Functionally, f(1)F(0) ATP synthase produces ATP from ADP in the presence of a proton or sodium gradient. F-type ATPases consist of two structural domains, F(1) containing the extramembraneous catalytic core and F(0) containing the membrane proton channel, linked together by a central stalk and a peripheral stalk. During catalysis, ATP synthesis in the catalytic domain of F(1) is coupled via a rotary mechanism of the central stalk subunits to proton translocation. In terms of biological role, component of the F(0) channel, it forms part of the peripheral stalk, linking F(1) to F(0). In Oryza nivara (Indian wild rice), this protein is ATP synthase subunit b, chloroplastic.